A 295-amino-acid chain; its full sequence is Small ribosomal subunit protein bS1 (295 aa).

S1 motif domains lie at 28-97 (GQLV…VSLR), 115-179 (GQTV…LSER), and 193-261 (GQLI…LSTK).

Belongs to the bacterial ribosomal protein bS1 family.

Binds mRNA. This chain is Small ribosomal subunit protein bS1 (rpsA), found in Synechococcus elongatus (strain ATCC 33912 / PCC 7942 / FACHB-805) (Anacystis nidulans R2).